Reading from the N-terminus, the 95-residue chain is Large ribosomal subunit protein uL23 (95 aa).

Belongs to the universal ribosomal protein uL23 family. Part of the 50S ribosomal subunit. Contacts protein L29, and trigger factor when it is bound to the ribosome.

One of the early assembly proteins it binds 23S rRNA. One of the proteins that surrounds the polypeptide exit tunnel on the outside of the ribosome. Forms the main docking site for trigger factor binding to the ribosome. In Pelotomaculum thermopropionicum (strain DSM 13744 / JCM 10971 / SI), this protein is Large ribosomal subunit protein uL23.